Here is a 718-residue protein sequence, read N- to C-terminus: MISTKEKNKIPKDSMTLLPCFYFVELPIVASSIVSLYFLELTDLFKPAKVGFQCYDRTLSMPYVETNEELIPLLMLLSLAFAAPAASIMVAEGMLYCLQSRLWGRAGGPAGAEGSINAGGCNFNSFLRRTVRFVGVHVFGLCATALVTDVIQLATGYHTPFFLTVCKPNYTLLGTSCEVNPYITQDICSGHDIHAILSARKTFPSQHATLSAFAAVYVSMYFNSVISDTTKLLKPILVFAFAIAAGVCGLTQITQYRSHPVDVYAGFLIGAGIAAYLACHAVGNFQAPPAEKPAAPAPAKDALRALTQRGHDSVYQQNKSVSTDELGPPGRLEGAPRPVAREKTSLGSLKRASVDVDLLAPRSPMAKENMVTFSHTLPRASAPSLDDPARRHMTIHVPLDASRSKQLISEWKQKSLEGRGLGLPDDASPGHLRAPAEPMAEEEEEEEDEEEEEEEEEEEDEGPAPPSLYPTVQARPGLGPRVILPPRAGPPPLVHIPEEGAQTGAGLSPKSGAGVRAKWLMMAEKSGAAVANPPRLLQVIAMSKAPGAPGPKAAETASSSSASSDSSQYRSPSDRDSASIVTIDAHAPHHPVVHLSAGGAPWEWKAAGGGAKAEADGGYELGDLARGFRGGAKPPGVSPGSSVSDVDQEEPRFGAVATVNLATGEGLPPLGAADGALGPGSRESTLRRHAGGLGLAEREAEAEAEGYFRKMQARRFPD.

Transmembrane regions (helical) follow at residues Leu18–Phe38, Leu70–Val90, and Phe133–Leu153. The N-linked (GlcNAc...) asparagine glycan is linked to Asn169. 3 consecutive transmembrane segments (helical) span residues His207 to Ser227, Leu233 to Ile253, and Val263 to Gly283. The segment at Ser313–Gly347 is disordered. Residues Val314–Thr323 show a composition bias toward polar residues. Asn318 carries N-linked (GlcNAc...) asparagine glycosylation. Phosphoserine occurs at positions 322 and 353. Thr376 carries the post-translational modification Phosphothreonine. The tract at residues Leu416–Ala488 is disordered. Phosphoserine is present on Ser428. Over residues Met439–Gly462 the composition is skewed to acidic residues. Ser508 carries the post-translational modification Phosphoserine. Residues Ala545–Ser571 are compositionally biased toward low complexity. Positions Ala545 to Ser577 are disordered. At Ser641 the chain carries Phosphoserine. Residues Gly664–Gly680 are compositionally biased toward low complexity. The segment at Gly664–Ala702 is disordered.

Belongs to the PA-phosphatase related phosphoesterase family.

It localises to the membrane. This chain is Phospholipid phosphatase-related protein type 3, found in Homo sapiens (Human).